The sequence spans 316 residues: 4-hydroxy-3-methylbut-2-enyl diphosphate reductase (316 aa).

Cysteine 12 contacts [4Fe-4S] cluster. 2 residues coordinate (2E)-4-hydroxy-3-methylbut-2-enyl diphosphate: histidine 41 and histidine 74. Positions 41 and 74 each coordinate dimethylallyl diphosphate. Residues histidine 41 and histidine 74 each coordinate isopentenyl diphosphate. Cysteine 96 is a [4Fe-4S] cluster binding site. Residue histidine 124 coordinates (2E)-4-hydroxy-3-methylbut-2-enyl diphosphate. Residue histidine 124 coordinates dimethylallyl diphosphate. Histidine 124 lines the isopentenyl diphosphate pocket. The active-site Proton donor is the glutamate 126. Threonine 167 serves as a coordination point for (2E)-4-hydroxy-3-methylbut-2-enyl diphosphate. Cysteine 197 contributes to the [4Fe-4S] cluster binding site. Residues serine 225, serine 226, asparagine 227, and serine 269 each coordinate (2E)-4-hydroxy-3-methylbut-2-enyl diphosphate. Residues serine 225, serine 226, asparagine 227, and serine 269 each coordinate dimethylallyl diphosphate. The isopentenyl diphosphate site is built by serine 225, serine 226, asparagine 227, and serine 269.

Belongs to the IspH family. Homodimer. The cofactor is [4Fe-4S] cluster.

The enzyme catalyses isopentenyl diphosphate + 2 oxidized [2Fe-2S]-[ferredoxin] + H2O = (2E)-4-hydroxy-3-methylbut-2-enyl diphosphate + 2 reduced [2Fe-2S]-[ferredoxin] + 2 H(+). It catalyses the reaction dimethylallyl diphosphate + 2 oxidized [2Fe-2S]-[ferredoxin] + H2O = (2E)-4-hydroxy-3-methylbut-2-enyl diphosphate + 2 reduced [2Fe-2S]-[ferredoxin] + 2 H(+). Its pathway is isoprenoid biosynthesis; dimethylallyl diphosphate biosynthesis; dimethylallyl diphosphate from (2E)-4-hydroxy-3-methylbutenyl diphosphate: step 1/1. It functions in the pathway isoprenoid biosynthesis; isopentenyl diphosphate biosynthesis via DXP pathway; isopentenyl diphosphate from 1-deoxy-D-xylulose 5-phosphate: step 6/6. In terms of biological role, catalyzes the conversion of 1-hydroxy-2-methyl-2-(E)-butenyl 4-diphosphate (HMBPP) into a mixture of isopentenyl diphosphate (IPP) and dimethylallyl diphosphate (DMAPP). Acts in the terminal step of the DOXP/MEP pathway for isoprenoid precursor biosynthesis. The polypeptide is 4-hydroxy-3-methylbut-2-enyl diphosphate reductase (Salmonella schwarzengrund (strain CVM19633)).